Consider the following 503-residue polypeptide: Probable cytosol aminopeptidase (503 aa).

The Mn(2+) site is built by Lys-270 and Asp-275. Lys-282 is an active-site residue. Residues Asp-293, Asp-352, and Glu-354 each coordinate Mn(2+). Residue Arg-356 is part of the active site.

It belongs to the peptidase M17 family. It depends on Mn(2+) as a cofactor.

The protein resides in the cytoplasm. The enzyme catalyses Release of an N-terminal amino acid, Xaa-|-Yaa-, in which Xaa is preferably Leu, but may be other amino acids including Pro although not Arg or Lys, and Yaa may be Pro. Amino acid amides and methyl esters are also readily hydrolyzed, but rates on arylamides are exceedingly low.. It carries out the reaction Release of an N-terminal amino acid, preferentially leucine, but not glutamic or aspartic acids.. Its function is as follows. Presumably involved in the processing and regular turnover of intracellular proteins. Catalyzes the removal of unsubstituted N-terminal amino acids from various peptides. The polypeptide is Probable cytosol aminopeptidase (Escherichia fergusonii (strain ATCC 35469 / DSM 13698 / CCUG 18766 / IAM 14443 / JCM 21226 / LMG 7866 / NBRC 102419 / NCTC 12128 / CDC 0568-73)).